Consider the following 449-residue polypeptide: MVLRERLSHILFHEKVGFLLLCLLWYISSAVTNTTSKSIFNELRCPVTLTFLQFGFVAFFSAVCLLFRKQFLGGTGIQKPSKYVLYTTLPLSIFQIGGHVFGSLATTKIPVSTVHTVKALSPLFTVLAYRFMFRHVYSAMTYFSLVPLTFGVTLACSFELSADIVGLLYALISTCIFVSQNIFGSKIFMEAKSHSTHTKKHYNKLNLLLYSSGVAFIVMIPVWLYQEGFAYLPEVGSPVFLNLIYNGLSHFFQNILAFTLLSIISPVAYSIASLIKRIFVIVVSIIWFQQATNFTQGSGIFLTAIGLWLYDRSKKGNLYESCKVKEFEKDALELEEQTMEDEKSYPSSGTQSPFYGKNFLPQITPRLDSVVPLISDSPMTPNSVYSNEGVTSSVSGNATPASVRQSTQNDFSNSNIHDRRSSYTFQLNNFKAPQPSRLWATETVPTLKI.

A run of 9 helical transmembrane segments spans residues 7–27 (LSHILFHEKVGFLLLCLLWYI), 47–67 (VTLTFLQFGFVAFFSAVCLLF), 84–104 (VLYTTLPLSIFQIGGHVFGSL), 109–129 (IPVSTVHTVKALSPLFTVLAY), 136–156 (VYSAMTYFSLVPLTFGVTLAC), 164–184 (IVGLLYALISTCIFVSQNIFG), 205–225 (LNLLLYSSGVAFIVMIPVWLY), 255–275 (ILAFTLLSIISPVAYSIASLI), and 278–298 (IFVIVVSIIWFQQATNFTQGS). 2 positions are modified to phosphoserine: S348 and S352. A Phosphotyrosine modification is found at Y355. The segment covering 382 to 415 (NSVYSNEGVTSSVSGNATPASVRQSTQNDFSNSN) has biased composition (polar residues). A disordered region spans residues 382–416 (NSVYSNEGVTSSVSGNATPASVRQSTQNDFSNSNI).

Belongs to the TPT transporter family.

The protein localises to the membrane. The sequence is that of Putative transporter C83.11 from Schizosaccharomyces pombe (strain 972 / ATCC 24843) (Fission yeast).